Here is a 317-residue protein sequence, read N- to C-terminus: Apolipoprotein E (317 aa).

The N-terminal stretch at 1 to 18 is a signal peptide; it reads MKVLWAALLVTFLAGCQA. Repeat copies occupy residues 80-101, 102-123, 124-145, 146-167, 168-189, 190-211, 212-233, and 234-255. The 8 X 22 AA approximate tandem repeats stretch occupies residues 80–255; it reads ALMDETMKEL…RLDEVKEQVA (176 aa). Position 143 is a methionine sulfoxide (Met-143). The residue at position 147 (Ser-147) is a Phosphoserine. Residues 158-168 are LDL and other lipoprotein receptors binding; it reads HLRKLRKRLLR. 162–165 is a binding site for heparin; sequence LRKR. Residues 210–290 form a lipid-binding and lipoprotein association region; sequence AATVGSLAGQ…SWFEPLVEDM (81 aa). Position 229-236 (229-236) interacts with heparin; that stretch reads GERLRARM. Residues 266–317 are homooligomerization; the sequence is QQIRLQAEAFQARLKSWFEPLVEDMQRQWAGLVEKVQAAVGTSAAPVPSDNH. The segment at 278-290 is specificity for association with VLDL; that stretch reads RLKSWFEPLVEDM.

It belongs to the apolipoprotein A1/A4/E family. In terms of assembly, homotetramer. May interact with ABCA1; functionally associated with ABCA1 in the biogenesis of HDLs. May interact with APP/A4 amyloid-beta peptide; the interaction is extremely stable in vitro but its physiological significance is unclear. May interact with MAPT. May interact with MAP2. In the cerebrospinal fluid, interacts with secreted SORL1. Interacts with PMEL; this allows the loading of PMEL luminal fragment on ILVs to induce fibril nucleation. In terms of processing, APOE exists as multiple glycosylated and sialylated glycoforms within cells and in plasma. The extent of glycosylation and sialylation are tissue and context specific. Post-translationally, glycated in plasma VLDL. Phosphorylated by FAM20C in the extracellular medium.

The protein localises to the secreted. Its subcellular location is the extracellular space. The protein resides in the extracellular matrix. It localises to the extracellular vesicle. It is found in the endosome. The protein localises to the multivesicular body. Its function is as follows. APOE is an apolipoprotein, a protein associating with lipid particles, that mainly functions in lipoprotein-mediated lipid transport between organs via the plasma and interstitial fluids. APOE is a core component of plasma lipoproteins and is involved in their production, conversion and clearance. Apolipoproteins are amphipathic molecules that interact both with lipids of the lipoprotein particle core and the aqueous environment of the plasma. As such, APOE associates with chylomicrons, chylomicron remnants, very low density lipoproteins (VLDL) and intermediate density lipoproteins (IDL) but shows a preferential binding to high-density lipoproteins (HDL). It also binds a wide range of cellular receptors including the LDL receptor/LDLR, the LDL receptor-related proteins LRP1, LRP2 and LRP8 and the very low-density lipoprotein receptor/VLDLR that mediate the cellular uptake of the APOE-containing lipoprotein particles. Finally, APOE also has a heparin-binding activity and binds heparan-sulfate proteoglycans on the surface of cells, a property that supports the capture and the receptor-mediated uptake of APOE-containing lipoproteins by cells. A main function of APOE is to mediate lipoprotein clearance through the uptake of chylomicrons, VLDLs, and HDLs by hepatocytes. APOE is also involved in the biosynthesis by the liver of VLDLs as well as their uptake by peripheral tissues ensuring the delivery of triglycerides and energy storage in muscle, heart and adipose tissues. By participating in the lipoprotein-mediated distribution of lipids among tissues, APOE plays a critical role in plasma and tissues lipid homeostasis. APOE is also involved in two steps of reverse cholesterol transport, the HDLs-mediated transport of cholesterol from peripheral tissues to the liver, and thereby plays an important role in cholesterol homeostasis. First, it is functionally associated with ABCA1 in the biogenesis of HDLs in tissues. Second, it is enriched in circulating HDLs and mediates their uptake by hepatocytes. APOE also plays an important role in lipid transport in the central nervous system, regulating neuron survival and sprouting. The sequence is that of Apolipoprotein E (APOE) from Hylobates lar (Lar gibbon).